We begin with the raw amino-acid sequence, 152 residues long: 3-dehydroquinate dehydratase (152 aa).

Tyr-26 functions as the Proton acceptor in the catalytic mechanism. Substrate contacts are provided by Asn-77, His-83, and Asp-90. His-103 functions as the Proton donor in the catalytic mechanism. Substrate contacts are provided by residues 104 to 105 (LS) and Arg-114.

This sequence belongs to the type-II 3-dehydroquinase family. As to quaternary structure, homododecamer.

It catalyses the reaction 3-dehydroquinate = 3-dehydroshikimate + H2O. Its pathway is metabolic intermediate biosynthesis; chorismate biosynthesis; chorismate from D-erythrose 4-phosphate and phosphoenolpyruvate: step 3/7. In terms of biological role, catalyzes a trans-dehydration via an enolate intermediate. The protein is 3-dehydroquinate dehydratase (aroQ) of Synechocystis sp. (strain ATCC 27184 / PCC 6803 / Kazusa).